We begin with the raw amino-acid sequence, 215 residues long: Adenylate kinase (215 aa).

G10–T15 serves as a coordination point for ATP. An NMP region spans residues S30–V59. Residues T31, R36, E57–V59, G85–R88, and Q92 contribute to the AMP site. The interval G126–D162 is LID. R127 lines the ATP pocket. 2 residues coordinate Zn(2+): C130 and C132. Residue S135–Y136 participates in ATP binding. Residues C149 and C152 each coordinate Zn(2+). Residues R159 and R170 each coordinate AMP. An ATP-binding site is contributed by K198.

Belongs to the adenylate kinase family. Monomer.

Its subcellular location is the cytoplasm. It catalyses the reaction AMP + ATP = 2 ADP. It functions in the pathway purine metabolism; AMP biosynthesis via salvage pathway; AMP from ADP: step 1/1. Catalyzes the reversible transfer of the terminal phosphate group between ATP and AMP. Plays an important role in cellular energy homeostasis and in adenine nucleotide metabolism. This chain is Adenylate kinase, found in Methanosarcina barkeri (strain Fusaro / DSM 804).